We begin with the raw amino-acid sequence, 157 residues long: uncharacterized protein (157 aa).

It to E.coli YcjD and H.influenzae HI_0925.

This is an uncharacterized protein from Haemophilus influenzae (strain ATCC 51907 / DSM 11121 / KW20 / Rd).